Reading from the N-terminus, the 260-residue chain is Indole-3-glycerol phosphate synthase (260 aa).

It belongs to the TrpC family.

It catalyses the reaction 1-(2-carboxyphenylamino)-1-deoxy-D-ribulose 5-phosphate + H(+) = (1S,2R)-1-C-(indol-3-yl)glycerol 3-phosphate + CO2 + H2O. It functions in the pathway amino-acid biosynthesis; L-tryptophan biosynthesis; L-tryptophan from chorismate: step 4/5. This is Indole-3-glycerol phosphate synthase from Neisseria meningitidis serogroup B (strain ATCC BAA-335 / MC58).